Reading from the N-terminus, the 484-residue chain is ATP synthase subunit beta, chloroplastic (484 aa).

G163 to T170 lines the ATP pocket.

Belongs to the ATPase alpha/beta chains family. In terms of assembly, F-type ATPases have 2 components, CF(1) - the catalytic core - and CF(0) - the membrane proton channel. CF(1) has five subunits: alpha(3), beta(3), gamma(1), delta(1), epsilon(1). CF(0) has four main subunits: a(1), b(1), b'(1) and c(9-12).

It localises to the plastid. Its subcellular location is the chloroplast thylakoid membrane. It catalyses the reaction ATP + H2O + 4 H(+)(in) = ADP + phosphate + 5 H(+)(out). Produces ATP from ADP in the presence of a proton gradient across the membrane. The catalytic sites are hosted primarily by the beta subunits. This Stigeoclonium helveticum (Green alga) protein is ATP synthase subunit beta, chloroplastic.